The sequence spans 97 residues: DNA-directed RNA polymerase subunit omega (97 aa).

This sequence belongs to the RNA polymerase subunit omega family. As to quaternary structure, the RNAP catalytic core consists of 2 alpha, 1 beta, 1 beta' and 1 omega subunit. When a sigma factor is associated with the core the holoenzyme is formed, which can initiate transcription.

The enzyme catalyses RNA(n) + a ribonucleoside 5'-triphosphate = RNA(n+1) + diphosphate. Its function is as follows. Promotes RNA polymerase assembly. Latches the N- and C-terminal regions of the beta' subunit thereby facilitating its interaction with the beta and alpha subunits. The protein is DNA-directed RNA polymerase subunit omega of Corynebacterium glutamicum (strain ATCC 13032 / DSM 20300 / JCM 1318 / BCRC 11384 / CCUG 27702 / LMG 3730 / NBRC 12168 / NCIMB 10025 / NRRL B-2784 / 534).